The chain runs to 197 residues: Probable molybdenum cofactor guanylyltransferase (197 aa).

GTP is bound by residues 10-12 (LCG), Lys22, Asp73, and Asp102. A Mg(2+)-binding site is contributed by Asp102.

This sequence belongs to the MobA family. Mg(2+) is required as a cofactor.

Its subcellular location is the cytoplasm. It carries out the reaction Mo-molybdopterin + GTP + H(+) = Mo-molybdopterin guanine dinucleotide + diphosphate. Functionally, transfers a GMP moiety from GTP to Mo-molybdopterin (Mo-MPT) cofactor (Moco or molybdenum cofactor) to form Mo-molybdopterin guanine dinucleotide (Mo-MGD) cofactor. The protein is Probable molybdenum cofactor guanylyltransferase of Methanothermobacter thermautotrophicus (strain ATCC 29096 / DSM 1053 / JCM 10044 / NBRC 100330 / Delta H) (Methanobacterium thermoautotrophicum).